The sequence spans 819 residues: Lon protease (819 aa).

The disordered stretch occupies residues 1-36; that stretch reads MDSTTNSDSPILDPNPEDVEKLLDESEEESEDQSTE. Residues 43–240 form the Lon N-terminal domain; the sequence is LFILPLNKRP…KALILLKKEL (198 aa). 393–400 is an ATP binding site; the sequence is GPPGVGKT. Residues 635–817 enclose the Lon proteolytic domain; sequence STPVGVATGL…DDVLKVAFPK (183 aa). Active-site residues include Ser723 and Lys766.

It belongs to the peptidase S16 family. As to quaternary structure, homohexamer. Organized in a ring with a central cavity.

The protein resides in the cytoplasm. The catalysed reaction is Hydrolysis of proteins in presence of ATP.. Its function is as follows. ATP-dependent serine protease that mediates the selective degradation of mutant and abnormal proteins as well as certain short-lived regulatory proteins. Required for cellular homeostasis and for survival from DNA damage and developmental changes induced by stress. Degrades polypeptides processively to yield small peptide fragments that are 5 to 10 amino acids long. Binds to DNA in a double-stranded, site-specific manner. In Chlamydia pneumoniae (Chlamydophila pneumoniae), this protein is Lon protease.